Here is a 217-residue protein sequence, read N- to C-terminus: MVFRRYVEVGRVAYISFGPHAGKLVAIVDVIDQNRALVDGPCTRVRRQAMPFKCMQLTDFILKFPHSARQKYVRKAWEKADINTKWAATRWAKKIDARERKAKMTDFDRFKVMKAKKMRNRIIKTEVKKLQRAAILKASPKKAAVAKAAIAAAAAAAAAKAKVPAKKATGPGKKAAGQKAPAQKAAGQKAAPPAKGQKGQKTPAQKAPAPKAAGKKA.

K79 is subject to N6-acetyllysine. K85 carries the post-translational modification N6-acetyllysine; alternate. K85 carries the N6-succinyllysine; alternate modification. K124 participates in a covalent cross-link: Glycyl lysine isopeptide (Lys-Gly) (interchain with G-Cter in SUMO2). S139 is subject to Phosphoserine. Residues 162–217 are disordered; sequence KVPAKKATGPGKKAAGQKAPAQKAAGQKAAPPAKGQKGQKTPAQKAPAPKAAGKKA. Residues 173-177 form a 1-1; approximate repeat; the sequence is KKAAG. The segment at 173-192 is 4 X 5 AA tandem repeats of Q-K-A-[APS]-X; that stretch reads KKAAGQKAPAQKAAGQKAAP. 5 repeat units span residues 178 to 182, 183 to 187, 188 to 192, 195 to 197, and 198 to 200. The tract at residues 195–200 is 2 X 3 AA tandem repeats of K-G-Q; the sequence is KGQKGQ. K206 bears the N6-succinyllysine mark.

The protein belongs to the eukaryotic ribosomal protein eL14 family. In terms of assembly, component of the large ribosomal subunit.

The protein localises to the cytoplasm. Its function is as follows. Component of the large ribosomal subunit. The ribosome is a large ribonucleoprotein complex responsible for the synthesis of proteins in the cell. This chain is Large ribosomal subunit protein eL14 (Rpl14), found in Mus musculus (Mouse).